The sequence spans 328 residues: UPF0421 protein SE_1574 (328 aa).

The next 4 helical transmembrane spans lie at 26–46, 61–81, 109–129, and 132–152; these read LFCM…IVTI, LPAT…FGDQ, AVLT…FNFF, and LLTA…ILPP.

Belongs to the UPF0421 family.

It localises to the cell membrane. This chain is UPF0421 protein SE_1574, found in Staphylococcus epidermidis (strain ATCC 12228 / FDA PCI 1200).